The chain runs to 779 residues: Potassium/sodium hyperpolarization-activated cyclic nucleotide-gated channel 3 (779 aa).

The interval 1–47 is disordered; that stretch reads MEEEARPAAGAGEAATPARETPPAAPAQARAASGGVPESAPEPKRRQ. Residues 1–96 are Cytoplasmic-facing; sequence MEEEARPAAG…PYSDFRFYWD (96 aa). The span at 7-32 shows a compositional bias: low complexity; that stretch reads PAAGAGEAATPARETPPAAPAQARAA. The tract at residues 45–90 is involved in subunit assembly; that stretch reads RRQLGTLLQPTVNKFSLRVFGSHKAVEIEQERVKSAGAWIIHPYSD. A helical transmembrane segment spans residues 97-117; it reads LIMLLLMVGNLIVLPVGITFF. Over 118 to 123 the chain is Extracellular; the sequence is KEENSP. A helical transmembrane segment spans residues 124–144; it reads PWIVFNVLSDTFFLLDLVLNF. The Cytoplasmic segment spans residues 145-170; the sequence is RTGIVVEEGAEILLAPRAIRTRYLRT. A helical transmembrane segment spans residues 171–191; the sequence is WFLVDLISSIPVDYIFLVVEL. Over 192 to 200 the chain is Extracellular; it reads EPRLDAEVY. The chain crosses the membrane as a helical; Voltage-sensor span at residues 201–221; sequence KTARALRIVRFTKILSLLRLL. At 222-252 the chain is on the cytoplasmic side; it reads RLSRLIRYIHQWEEIFHMTYDLASAVVRIFN. The chain crosses the membrane as a helical span at residues 253-273; sequence LIGMMLLLCHWDGCLQFLVPM. Topologically, residues 274–296 are extracellular; the sequence is LQDFPSDCWVSMNRMVNHSWGRQ. Asn-290 carries N-linked (GlcNAc...) asparagine glycosylation. An intramembrane region (pore-forming) is located at residues 297–318; that stretch reads YSHALFKAMSHMLCIGYGQQAP. Residues 319-328 lie on the Extracellular side of the membrane; sequence VGMPDVWLTM. The chain crosses the membrane as a helical span at residues 329 to 349; sequence LSMIVGATCYAMFIGHATALI. Residues 350–779 lie on the Cytoplasmic side of the membrane; it reads QSLDSSRRQY…PRGPQISANM (430 aa). Residues 353-779 form an interaction with KCTD3 region; sequence DSSRRQYQEK…PRGPQISANM (427 aa). 3',5'-cyclic AMP contacts are provided by Gly-491, Glu-492, Cys-494, Arg-501, Thr-502, Arg-542, and Arg-545. Residues 549 to 569 form a disordered region; that stretch reads KNSILQRKRSEPSPGSSGGVM. Ser-633 carries the phosphoserine modification. Residues 687 to 697 show a composition bias toward polar residues; the sequence is SLSRTGRSQVS. The tract at residues 687–779 is disordered; it reads SLSRTGRSQV…PRGPQISANM (93 aa).

This sequence belongs to the potassium channel HCN family. In terms of assembly, homotetramer. The potassium channel is composed of a homo- or heterotetrameric complex of pore-forming subunits. Interacts with HCN1. Interacts with KCTD3; this interaction increases cell surface expression and current density of this channel. Interacts with PEX5L. As to expression, detected in hypothalamus, amygdala, olfactory bulb, hippocampus and retina (at protein level). Highly expressed in brain and heart, in particular in ventricle, atrium and in sinoatrial node (SAN). Detected at low levels in skeletal muscle and lung. Expressed in DRG neurons.

It is found in the cell membrane. The enzyme catalyses K(+)(in) = K(+)(out). It carries out the reaction Na(+)(in) = Na(+)(out). Its activity is regulated as follows. Unlike HCN2 and HCN4, HCN3 is insensitive to cyclic nucleotides, such as cAMP or cGMP. This lack of sensitivity of HCN3, despite harboring a functional cyclic nucleotide-binding domain (CNBD), may be explained by its shorter C-terminal sequence, which may alter the normal autoinhibition of the channel. Inhibited by Cs(1+) and ivabradine. Phosphatidylinositol-4,5-bisphosphate (PIP(2)) shifts HCN3 activation to more depolarized potentials and accelerated activation kinetics. Functionally, hyperpolarization-activated ion channel that are permeable to sodium and potassium ions, with an about 3:1 preference for potassium ions. Contributes to the native pacemaker currents in heart (If) and in neurons (Ih). In particular, plays a pivotal role in maintaining excitability and promoting rhythmic burst firing within hypothalamic nuclei. Exerts a significant influence on the configuration of the cardiac action potential waveform. Does not appear to play a prominent role in the processing of acute, neuropathic, or inflammatory pain. The sequence is that of Potassium/sodium hyperpolarization-activated cyclic nucleotide-gated channel 3 (Hcn3) from Mus musculus (Mouse).